A 144-amino-acid chain; its full sequence is Large ribosomal subunit protein uL11 (144 aa).

Belongs to the universal ribosomal protein uL11 family. In terms of assembly, part of the ribosomal stalk of the 50S ribosomal subunit. Interacts with L10 and the large rRNA to form the base of the stalk. L10 forms an elongated spine to which L12 dimers bind in a sequential fashion forming a multimeric L10(L12)X complex. Post-translationally, one or more lysine residues are methylated.

Its function is as follows. Forms part of the ribosomal stalk which helps the ribosome interact with GTP-bound translation factors. This is Large ribosomal subunit protein uL11 from Saccharopolyspora erythraea (strain ATCC 11635 / DSM 40517 / JCM 4748 / NBRC 13426 / NCIMB 8594 / NRRL 2338).